Reading from the N-terminus, the 513-residue chain is GMP synthase [glutamine-hydrolyzing] (513 aa).

Positions Met9–Glu198 constitute a Glutamine amidotransferase type-1 domain. Catalysis depends on Cys86, which acts as the Nucleophile. Active-site residues include His172 and Glu174. A GMPS ATP-PPase domain is found at Trp199–Arg388. Ser226–Ser232 is a binding site for ATP.

As to quaternary structure, homodimer.

The catalysed reaction is XMP + L-glutamine + ATP + H2O = GMP + L-glutamate + AMP + diphosphate + 2 H(+). The protein operates within purine metabolism; GMP biosynthesis; GMP from XMP (L-Gln route): step 1/1. Its function is as follows. Catalyzes the synthesis of GMP from XMP. In Staphylococcus carnosus (strain TM300), this protein is GMP synthase [glutamine-hydrolyzing].